Reading from the N-terminus, the 217-residue chain is ATP-dependent Clp protease proteolytic subunit 2 (217 aa).

The Nucleophile role is filled by Ser113. His138 is an active-site residue.

Belongs to the peptidase S14 family. As to quaternary structure, fourteen ClpP subunits assemble into 2 heptameric rings which stack back to back to give a disk-like structure with a central cavity, resembling the structure of eukaryotic proteasomes.

It localises to the cytoplasm. It catalyses the reaction Hydrolysis of proteins to small peptides in the presence of ATP and magnesium. alpha-casein is the usual test substrate. In the absence of ATP, only oligopeptides shorter than five residues are hydrolyzed (such as succinyl-Leu-Tyr-|-NHMec, and Leu-Tyr-Leu-|-Tyr-Trp, in which cleavage of the -Tyr-|-Leu- and -Tyr-|-Trp bonds also occurs).. In terms of biological role, cleaves peptides in various proteins in a process that requires ATP hydrolysis. Has a chymotrypsin-like activity. Plays a major role in the degradation of misfolded proteins. This is ATP-dependent Clp protease proteolytic subunit 2 from Frankia casuarinae (strain DSM 45818 / CECT 9043 / HFP020203 / CcI3).